The following is a 78-amino-acid chain: Rubredoxin (78 aa).

One can recognise a Rubredoxin-like domain in the interval 23 to 74 (DARLECKICWWEYDPEVGDPVWQIAPGTSFSALPAHWRCPNCDGEAEQFMVL). The Fe cation site is built by Cys28, Cys31, Cys61, and Cys64.

This sequence belongs to the rubredoxin family. Fe(3+) is required as a cofactor.

Rubredoxin is a small nonheme, iron protein lacking acid-labile sulfide. Its single Fe, chelated to 4 Cys, functions as an electron acceptor and may also stabilize the conformation of the molecule. Could be involved in hydrogenase-linked redox processes. This chain is Rubredoxin (hoxR), found in Cupriavidus necator (strain ATCC 17699 / DSM 428 / KCTC 22496 / NCIMB 10442 / H16 / Stanier 337) (Ralstonia eutropha).